A 598-amino-acid chain; its full sequence is UvrABC system protein C (598 aa).

The GIY-YIG domain maps to 14–91; it reads DSPGCYLHKD…IQKNMPKYNI (78 aa). In terms of domain architecture, UVR spans 196 to 231; it reads DKIIEDLRSKMLAASEEMAFERAAEYRDLISGIATM.

Belongs to the UvrC family. As to quaternary structure, interacts with UvrB in an incision complex.

Its subcellular location is the cytoplasm. Its function is as follows. The UvrABC repair system catalyzes the recognition and processing of DNA lesions. UvrC both incises the 5' and 3' sides of the lesion. The N-terminal half is responsible for the 3' incision and the C-terminal half is responsible for the 5' incision. In Streptococcus pyogenes serotype M12 (strain MGAS2096), this protein is UvrABC system protein C.